The sequence spans 33 residues: Cytochrome b6-f complex subunit 7 (33 aa).

The helical transmembrane segment at 9–29 (AVICFTLTLIGLSLGFVLLKI) threads the bilayer.

This sequence belongs to the PetM family. As to quaternary structure, the 4 large subunits of the cytochrome b6-f complex are cytochrome b6, subunit IV (17 kDa polypeptide, PetD), cytochrome f and the Rieske protein, while the 4 small subunits are PetG, PetL, PetM and PetN. The complex functions as a dimer.

The protein localises to the plastid. It localises to the cyanelle thylakoid membrane. Component of the cytochrome b6-f complex, which mediates electron transfer between photosystem II (PSII) and photosystem I (PSI), cyclic electron flow around PSI, and state transitions. This is Cytochrome b6-f complex subunit 7 from Cyanophora paradoxa.